We begin with the raw amino-acid sequence, 355 residues long: Putative testis-specific Y-encoded-like protein 3 (355 aa).

Residues 1–131 form a disordered region; that stretch reads MADKRAGTPE…GEEKQEVAAE (131 aa). Basic and acidic residues predominate over residues 93-128; it reads ASEKAEDANKEEGAIFKKEPAEEVEKQQEGEEKQEV.

The protein belongs to the nucleosome assembly protein (NAP) family.

In Homo sapiens (Human), this protein is Putative testis-specific Y-encoded-like protein 3 (TSPY26P).